The sequence spans 257 residues: NAD-dependent protein deacetylase (257 aa).

A Deacetylase sirtuin-type domain is found at 3-252 (NGECLEGGRK…DLVLNEVKGI (250 aa)). The NAD(+) site is built by alanine 29, threonine 33, phenylalanine 40, arginine 41, glutamine 105, isoleucine 107, aspartate 108, and histidine 123. Phenylalanine 40 contacts nicotinamide. 2 residues coordinate nicotinamide: isoleucine 107 and aspartate 108. The active-site Proton acceptor is histidine 123. Zn(2+) contacts are provided by cysteine 131, cysteine 134, cysteine 156, and cysteine 159. Residues serine 195, serine 196, and asparagine 220 each contribute to the NAD(+) site.

Belongs to the sirtuin family. Class U subfamily. It depends on Zn(2+) as a cofactor.

The protein resides in the cytoplasm. It catalyses the reaction N(6)-acetyl-L-lysyl-[protein] + NAD(+) + H2O = 2''-O-acetyl-ADP-D-ribose + nicotinamide + L-lysyl-[protein]. Its function is as follows. NAD-dependent protein deacetylase which modulates the activities of several enzymes which are inactive in their acetylated form. Deacetylates the N-terminal lysine residue of Alba, the major archaeal chromatin protein and that, in turn, increases Alba's DNA binding affinity, thereby repressing transcription. The protein is NAD-dependent protein deacetylase of Caldivirga maquilingensis (strain ATCC 700844 / DSM 13496 / JCM 10307 / IC-167).